The primary structure comprises 265 residues: Glutamate racemase (265 aa).

Residues 12 to 13 and 44 to 45 each bind substrate; these read DS and YG. Catalysis depends on Cys-75, which acts as the Proton donor/acceptor. Substrate is bound at residue 76-77; sequence NT. The Proton donor/acceptor role is filled by Cys-186. Residue 187–188 coordinates substrate; it reads TH.

It belongs to the aspartate/glutamate racemases family.

It carries out the reaction L-glutamate = D-glutamate. It functions in the pathway cell wall biogenesis; peptidoglycan biosynthesis. In terms of biological role, provides the (R)-glutamate required for cell wall biosynthesis. The protein is Glutamate racemase of Pseudomonas putida (strain W619).